The sequence spans 388 residues: Protein RecA (388 aa).

79-86 (GPESSGKT) contributes to the ATP binding site. Residues 347–372 (IDGEEVSEQDTENKKDEPKKEEAVNE) are disordered. The span at 357 to 369 (TENKKDEPKKEEA) shows a compositional bias: basic and acidic residues.

Belongs to the RecA family.

Its subcellular location is the cytoplasm. In terms of biological role, can catalyze the hydrolysis of ATP in the presence of single-stranded DNA, the ATP-dependent uptake of single-stranded DNA by duplex DNA, and the ATP-dependent hybridization of homologous single-stranded DNAs. It interacts with LexA causing its activation and leading to its autocatalytic cleavage. The polypeptide is Protein RecA (Streptococcus pneumoniae (strain CGSP14)).